Here is a 410-residue protein sequence, read N- to C-terminus: WD repeat and FYVE domain-containing protein 1 (410 aa).

WD repeat units lie at residues 22 to 61 (GHQD…QYWP), 66 to 105 (TMAS…NKMN), 112 to 150 (AHQN…NMLG), 153 to 192 (FFSS…CSVI), 197 to 236 (GHEG…GRTL), and 240 to 279 (GHHD…EEAP). Residues 281–352 (WLESDSCQKC…VCDSCYDSIK (72 aa)) form an FYVE-type zinc finger. Cys-287, Cys-290, Cys-314, Cys-317, Cys-322, Cys-325, Cys-344, and Cys-347 together coordinate Zn(2+). The stretch at 364–403 (EGKHNISHMSMDIARGLMVTCGTDRVVKIWDMTPVVGCSL) is one WD 7 repeat. At Ser-408 the chain carries Phosphoserine.

In terms of assembly, binds PtdIns3P in vitro with high specificity over other phosphoinositides. Interacts (via WD repeat 2) with tyrosine-phosphorylated TLR3 (via TIR domain) in response to poly(I:C). Interacts with TLR4 in response to LPS. Interacts with TICAM1 in response to poly(I:C).

The protein resides in the early endosome. Its function is as follows. Positively regulates TLR3- and TLR4-mediated signaling pathways by bridging the interaction between TLR3 or TLR4 and TICAM1. Promotes TLR3/4 ligand-induced activation of transcription factors IRF3 and NF-kappa-B, as well as the production of IFN-beta and inflammatory cytokines. The sequence is that of WD repeat and FYVE domain-containing protein 1 (Wdfy1) from Mus musculus (Mouse).